Consider the following 1491-residue polypeptide: Pleckstrin homology domain-containing family H member 2 (1491 aa).

Residues A19 to V177 are a coiled coil. Disordered regions lie at residues A232–P435, D506–F546, and S612–A668. Residues T253–R264 show a composition bias toward polar residues. Basic and acidic residues predominate over residues K374–K385. Residues L392–P406 show a composition bias toward polar residues. Low complexity predominate over residues S657 to D666. PH domains follow at residues P702 to R796 and K810 to G918. Positions H954–L1109 constitute a MyTH4 domain. One can recognise an FERM domain in the interval F1120–K1449. The interval Q1466–L1491 is disordered.

Self-associates. Interacts with TGFB1I1. Expressed in the kidney and testis. Expressed in the kidney exclusively by glomerular podocytes.

It localises to the cytoplasm. Its subcellular location is the cytoskeleton. The protein localises to the cell membrane. It is found in the cell projection. The protein resides in the lamellipodium. Its function is as follows. In the kidney glomerulus may play a role in linking podocyte foot processes to the glomerular basement membrane. May be involved in stabilization of F-actin by attenuating its depolymerization. Can recruit TGFB1I1 from focal adhesions to podocyte lamellipodia. The chain is Pleckstrin homology domain-containing family H member 2 (Plekhh2) from Mus musculus (Mouse).